Reading from the N-terminus, the 139-residue chain is Translation initiation factor 2 subunit beta (139 aa).

The protein belongs to the eIF-2-beta/eIF-5 family. Heterotrimer composed of an alpha, a beta and a gamma chain.

In terms of biological role, eIF-2 functions in the early steps of protein synthesis by forming a ternary complex with GTP and initiator tRNA. This chain is Translation initiation factor 2 subunit beta, found in Saccharolobus solfataricus (strain ATCC 35092 / DSM 1617 / JCM 11322 / P2) (Sulfolobus solfataricus).